The primary structure comprises 484 residues: Glutamate--tRNA ligase (484 aa).

The short motif at 11 to 21 (PSPTGYLHIGN) is the 'HIGH' region element. The 'KMSKS' region signature appears at 252-256 (KLSKR). Residue K255 coordinates ATP.

Belongs to the class-I aminoacyl-tRNA synthetase family. Glutamate--tRNA ligase type 1 subfamily. In terms of assembly, monomer.

The protein resides in the cytoplasm. It carries out the reaction tRNA(Glu) + L-glutamate + ATP = L-glutamyl-tRNA(Glu) + AMP + diphosphate. In terms of biological role, catalyzes the attachment of glutamate to tRNA(Glu) in a two-step reaction: glutamate is first activated by ATP to form Glu-AMP and then transferred to the acceptor end of tRNA(Glu). This chain is Glutamate--tRNA ligase, found in Staphylococcus aureus (strain Mu3 / ATCC 700698).